The chain runs to 612 residues: FAD-linked oxidoreductase notD' (612 aa).

The first 19 residues, 1 to 19, serve as a signal peptide directing secretion; that stretch reads MRDIRELLLVLFTSCLALG. N-linked (GlcNAc...) asparagine glycosylation is found at N50, N86, and N109. An FAD-binding PCMH-type domain is found at 124-307; it reads GQGRIPRYSA…TSITMPVFGA (184 aa). N-linked (GlcNAc...) asparagine glycans are attached at residues N311 and N396.

The protein belongs to the oxygen-dependent FAD-linked oxidoreductase family. Requires FAD as cofactor.

Its pathway is alkaloid biosynthesis. Functionally, FAD-linked oxidoreductase; part of the gene cluster that mediates the biosynthesis of notoamide, a fungal indole alkaloid that belongs to a family of natural products containing a characteristic bicyclo[2.2.2]diazaoctane core. The first step of notoamide biosynthesis involves coupling of L-proline and L-tryptophan by the bimodular NRPS notE', to produce cyclo-L-tryptophan-L-proline called brevianamide F. The reverse prenyltransferase notF' then acts as a deoxybrevianamide E synthase and converts brevianamide F to deoxybrevianamide E via reverse prenylation at C-2 of the indole ring leading to the bicyclo[2.2.2]diazaoctane core. Deoxybrevianamide E is further hydroxylated at C-6 of the indole ring, likely catalyzed by the cytochrome P450 monooxygenase notG', to yield 6-hydroxy-deoxybrevianamide E. 6-hydroxy-deoxybrevianamide E is a specific substrate of the prenyltransferase notC' for normal prenylation at C-7 to produce 6-hydroxy-7-prenyl-deoxybrevianamide, also called notoamide S. As the proposed pivotal branching point in notoamide biosynthesis, notoamide S can be diverted to notoamide E through an oxidative pyran ring closure putatively catalyzed by either notH' cytochrome P450 monooxygenase or the notD' FAD-linked oxidoreductase. This step would be followed by an indole 2,3-epoxidation-initiated pinacol-like rearrangement catalyzed by the notB' FAD-dependent monooxygenase leading to the formation of notoamide C and notoamide D. On the other hand notoamide S is converted to notoamide T by notH' (or notD'), a bifunctional oxidase that also functions as the intramolecular Diels-Alderase responsible for generation of (-)-notoamide T. To generate antipodal (+)-notoaminide T, notH (or notD) in Aspergillus strain MF297-2 is expected to catalyze a Diels-Alder reaction leading to the opposite stereochemistry. The remaining oxidoreductase notD' (or notH') likely catalyzes the oxidative pyran ring formation to yield (-)-stephacidin A. The FAD-dependent monooxygenase notI' is highly similar to notB' and is predicted to catalyze a similar conversion from (-)-stephacidin A to (+)-notoamide B via the 2,3-epoxidation of (-)-stephacidin A followed by a pinacol-type rearrangement. Finally, it remains unclear which enzyme could be responsible for the final hydroxylation steps leading to notoamide A and sclerotiamide. In Aspergillus versicolor, this protein is FAD-linked oxidoreductase notD'.